We begin with the raw amino-acid sequence, 410 residues long: MWAFPELPLPLPLLVNLIGSLLGFVATVTLIPAFRSHFIAARLCGQDLNKLSQQQIPESQGVISGAVFLIILFCFIPFPFLNCFVEEQCKAFPHHEFVALIGALLAICCMIFLGFADDVLNLRWRHKLLLPTAASLPLLMVYFTNFGNTTIVVPKPFRWILGLHLDLGILYYVYMGLLAVFCTNAINILAGINGLEAGQSLVISASIIVFNLVELEGDYRDDHIFSLYFMIPFFFTTLGLLYHNWYPSRVFVGDTFCYFAGMTFAVVGILGHFSKTMLLFFMPQVFNFLYSLPQLFHIIPCPRHRMPRLNAKTGKLEMSYSKFKTKNLSFLGTFILKVAENLRLVTVHQGESEDGAFTECNNMTLINLLLKVFGPIHERNLTLLLLLLQVLSSAATFSIRYQLVRLFYDV.

Residues 1 to 10 are Lumenal-facing; it reads MWAFPELPLP. A helical membrane pass occupies residues 11-40; that stretch reads LPLLVNLIGSLLGFVATVTLIPAFRSHFIA. Residues 41 to 60 are Cytoplasmic-facing; the sequence is ARLCGQDLNKLSQQQIPESQ. UDP-N-acetyl-alpha-D-glucosamine-binding positions include 46-48 and glutamate 58; that span reads QDL. Residues 61-80 traverse the membrane as a helical segment; that stretch reads GVISGAVFLIILFCFIPFPF. Topologically, residues 81–93 are lumenal; sequence LNCFVEEQCKAFP. Residues 94 to 120 traverse the membrane as a helical segment; that stretch reads HHEFVALIGALLAICCMIFLGFADDVL. Residues 121–123 are Cytoplasmic-facing; it reads NLR. The chain crosses the membrane as a helical span at residues 124 to 145; it reads WRHKLLLPTAASLPLLMVYFTN. Lysine 127 lines the dolichyl phosphate pocket. The Lumenal portion of the chain corresponds to 146–168; sequence FGNTTIVVPKPFRWILGLHLDLG. An N-linked (GlcNAc...) asparagine glycan is attached at asparagine 148. The chain crosses the membrane as a helical span at residues 169 to 188; the sequence is ILYYVYMGLLAVFCTNAINI. Dolichyl phosphate is bound at residue 180 to 188; that stretch reads VFCTNAINI. Residue asparagine 187 coordinates Mg(2+). Topologically, residues 189–194 are cytoplasmic; the sequence is LAGING. Asparagine 193 provides a ligand contact to UDP-N-acetyl-alpha-D-glucosamine. Residues 195 to 215 traverse the membrane as a helical segment; it reads LEAGQSLVISASIIVFNLVEL. At 216 to 220 the chain is on the lumenal side; the sequence is EGDYR. Residues 221–244 form a helical membrane-spanning segment; that stretch reads DDHIFSLYFMIPFFFTTLGLLYHN. The Cytoplasmic segment spans residues 245–252; the sequence is WYPSRVFV. Residues 253–271 form a helical membrane-spanning segment; the sequence is GDTFCYFAGMTFAVVGILG. Aspartate 254 contacts Mg(2+). Residues 272-273 are Lumenal-facing; it reads HF. Residues 274 to 295 traverse the membrane as a helical segment; that stretch reads SKTMLLFFMPQVFNFLYSLPQL. Residues 296–377 are Cytoplasmic-facing; sequence FHIIPCPRHR…LLLKVFGPIH (82 aa). 303-305 provides a ligand contact to UDP-N-acetyl-alpha-D-glucosamine; that stretch reads RHR. Residues 378 to 402 traverse the membrane as a helical segment; sequence ERNLTLLLLLLQVLSSAATFSIRYQ. The Lumenal segment spans residues 403-410; it reads LVRLFYDV.

Belongs to the glycosyltransferase 4 family. In terms of assembly, homodimer. Mg(2+) is required as a cofactor.

It localises to the endoplasmic reticulum membrane. It catalyses the reaction a di-trans,poly-cis-dolichyl phosphate + UDP-N-acetyl-alpha-D-glucosamine = an N-acetyl-alpha-D-glucosaminyl-diphospho-di-trans,poly-cis-dolichol + UMP. Its pathway is protein modification; protein glycosylation. Inhibited by natural nucleoside antibiotic tunicamycin, which acts as a structural analog and competitor of UDP-GlcNAc. UDP-N-acetylglucosamine--dolichyl-phosphate N-acetylglucosaminephosphotransferase that operates in the biosynthetic pathway of dolichol-linked oligosaccharides, the glycan precursors employed in protein asparagine (N)-glycosylation. The assembly of dolichol-linked oligosaccharides begins on the cytosolic side of the endoplasmic reticulum membrane and finishes in its lumen. The sequential addition of sugars to dolichol pyrophosphate produces dolichol-linked oligosaccharides containing fourteen sugars, including two GlcNAcs, nine mannoses and three glucoses. Once assembled, the oligosaccharide is transferred from the lipid to nascent proteins by oligosaccharyltransferases. Catalyzes the initial step of dolichol-linked oligosaccharide biosynthesis, transfering GlcNAc-1-P from cytosolic UDP-GlcNAc onto the carrier lipid dolichyl phosphate (P-dolichol), yielding GlcNAc-P-P-dolichol embedded in the cytoplasmic leaflet of the endoplasmic reticulum membrane. In Mus musculus (Mouse), this protein is UDP-N-acetylglucosamine--dolichyl-phosphate N-acetylglucosaminephosphotransferase.